We begin with the raw amino-acid sequence, 522 residues long: Glucose-6-phosphate isomerase (522 aa).

Glu-351 acts as the Proton donor in catalysis. Active-site residues include His-382 and Lys-491.

This sequence belongs to the GPI family.

It localises to the cytoplasm. The enzyme catalyses alpha-D-glucose 6-phosphate = beta-D-fructose 6-phosphate. Its pathway is carbohydrate biosynthesis; gluconeogenesis. It participates in carbohydrate degradation; glycolysis; D-glyceraldehyde 3-phosphate and glycerone phosphate from D-glucose: step 2/4. Its function is as follows. Catalyzes the reversible isomerization of glucose-6-phosphate to fructose-6-phosphate. This chain is Glucose-6-phosphate isomerase, found in Albidiferax ferrireducens (strain ATCC BAA-621 / DSM 15236 / T118) (Rhodoferax ferrireducens).